The following is a 504-amino-acid chain: MDESSLEEAIGTYRAQLQQVELALSAGLGSAEQDDLLKLKEDLQQLIELTESSLVSVKKSQLLAALEEASTNQSDTSVPQETALDNEFAAFYAELSEDSNEVKPNPDTDEENEEEEQDISGTKVCAPYRTSWGTLEYHNAMVVCPEEPEGEEARVRVFYIHPTHKSMKPCGFYLEGKCRFMDNCRYSHGEVVCVSELRDFLEADISNMESGSACLAKHEDGIWYPARISEIEGGFYTVKFDSLLLKEAVLEADGIIPPLRQDDVSSSSSSDSEDDAECDGGYAKVFTSREEDLAQVNTAEFCGWEAHTRGIGSKLLMKMGYELGKGLGKTLSGRVEPVQAVVLPKGHSLDICAELTQRKTAAAIAKNNPTSHKRKAKKKKASTSTRHNVFDFLNSKLGDRAQSASHSSSSLVTGAEAYRGGKSTKRSLNVRLFEAAEKVTQVEREIQQLTKSLSKRNGRDAAVVSRLEEKLAASRKLLEQLKAQEQAIQREQKKADTHKKMTEF.

Residues 95–121 (LSEDSNEVKPNPDTDEENEEEEQDISG) are disordered. Over residues 107 to 118 (DTDEENEEEEQD) the composition is skewed to acidic residues. Residues 165-191 (KSMKPCGFYLEGKCRFMDNCRYSHGEV) form a C3H1-type zinc finger. In terms of domain architecture, G-patch spans 308–354 (TRGIGSKLLMKMGYELGKGLGKTLSGRVEPVQAVVLPKGHSLDICAE).

The protein resides in the nucleus. Functionally, transcription repressor that specifically binds the 5'-GGAG[GA]A[GA]A-3' consensus sequence. Represses transcription by recruiting the chromatin multiprotein complex NuRD to target promoters. Negatively regulates expression of EGFR, a gene involved in cell proliferation, survival and migration. The protein is Zinc finger CCCH-type with G patch domain-containing protein (zgpat) of Danio rerio (Zebrafish).